The primary structure comprises 339 residues: Phenylalanine--tRNA ligase alpha subunit (339 aa).

Residue glutamate 254 coordinates Mg(2+).

Belongs to the class-II aminoacyl-tRNA synthetase family. Phe-tRNA synthetase alpha subunit type 1 subfamily. In terms of assembly, tetramer of two alpha and two beta subunits. The cofactor is Mg(2+).

The protein localises to the cytoplasm. It carries out the reaction tRNA(Phe) + L-phenylalanine + ATP = L-phenylalanyl-tRNA(Phe) + AMP + diphosphate + H(+). The polypeptide is Phenylalanine--tRNA ligase alpha subunit (Dictyoglomus turgidum (strain DSM 6724 / Z-1310)).